We begin with the raw amino-acid sequence, 379 residues long: Succinyl-diaminopimelate desuccinylase (379 aa).

Position 70 (histidine 70) interacts with Zn(2+). The active site involves aspartate 72. Residue aspartate 103 coordinates Zn(2+). The active-site Proton acceptor is glutamate 137. Zn(2+) is bound by residues glutamate 138, glutamate 166, and histidine 352.

Belongs to the peptidase M20A family. DapE subfamily. As to quaternary structure, homodimer. It depends on Zn(2+) as a cofactor. The cofactor is Co(2+).

The catalysed reaction is N-succinyl-(2S,6S)-2,6-diaminopimelate + H2O = (2S,6S)-2,6-diaminopimelate + succinate. The protein operates within amino-acid biosynthesis; L-lysine biosynthesis via DAP pathway; LL-2,6-diaminopimelate from (S)-tetrahydrodipicolinate (succinylase route): step 3/3. Functionally, catalyzes the hydrolysis of N-succinyl-L,L-diaminopimelic acid (SDAP), forming succinate and LL-2,6-diaminopimelate (DAP), an intermediate involved in the bacterial biosynthesis of lysine and meso-diaminopimelic acid, an essential component of bacterial cell walls. In Burkholderia vietnamiensis (strain G4 / LMG 22486) (Burkholderia cepacia (strain R1808)), this protein is Succinyl-diaminopimelate desuccinylase.